A 480-amino-acid polypeptide reads, in one-letter code: MILKLYNTRTKDFSELANFSDVKVYACGPTVYNYAHIGNFRTYIFGDLLIKTLRFLGYKVNYAMNITDIGHLTGDLDDGEDKVAKTAREKGLTVYEISKFFTEAFFKDCKKLNVVYPDKVLIASKHIPNMIEVIKILEEKKFTYFSNGNVYFDTSCFKSYGEMAGIDLIDKDMAFSRVDIDKFKRNKTDFVLWFTNSKFKDQEMKWDSPWGFGYPSWHLECAAMNLEYFKDTLDIHLGGVDHIGVHHINEIAIVECFLNKKWCDIFVHGEFLIMDYNKMSKSHGNFITVKGLEEQNFSPLDFRYLCLTSHYRNQLKFSFNNLKASKIARENMINRLSYFYASLDPADLNMLNKDLKNFGFSIEKEYYDSFVEKVSFDLNVSKGLALLWEVIKSENLGFVSKLKLAFIFDEIISLNLREEILKKSENHNIVIDENMKILLEERRIAKCEKNFKRADEIRDFFAKKGFVLIDTKEGTKVKRG.

C27 is a Zn(2+) binding site. Residues 29-39 (PTVYNYAHIGN) carry the 'HIGH' region motif. Positions 221, 246, and 250 each coordinate Zn(2+). Positions 278–282 (KMSKS) match the 'KMSKS' region motif. Residue K281 participates in ATP binding.

The protein belongs to the class-I aminoacyl-tRNA synthetase family. In terms of assembly, monomer. Zn(2+) serves as cofactor.

Its subcellular location is the cytoplasm. It carries out the reaction tRNA(Cys) + L-cysteine + ATP = L-cysteinyl-tRNA(Cys) + AMP + diphosphate. The sequence is that of Cysteine--tRNA ligase from Borrelia garinii subsp. bavariensis (strain ATCC BAA-2496 / DSM 23469 / PBi) (Borreliella bavariensis).